A 204-amino-acid polypeptide reads, in one-letter code: MLASIEEAVNDFRDGKFLIVLDDETRENEGDLIIAGCKVTTEQMAFLVRHSSGYVCVPMTGERLDSLEIPMMVDNNEDRMRTAYAVTLDYANGTTTGISAHDRALTTRQLANPEVTSPREFNRPGHIVPLRARDGGVLERDGHTEAAVDLCKLAGLPPVGAICELVREEDGLMSRFDDCISFGKKWGIKVITIESLKSYIKGRM.

Glu27 is a Mg(2+) binding site. Position 31 (Asp31) interacts with D-ribulose 5-phosphate. At Cys56 the chain carries S-glutathionyl cysteine. Residues Thr82 and Arg140–Thr144 contribute to the D-ribulose 5-phosphate site. His143 contributes to the Mg(2+) binding site.

The protein belongs to the DHBP synthase family. In terms of assembly, homodimer. Requires Mg(2+) as cofactor. Mn(2+) is required as a cofactor. In terms of processing, S-glutathionylation is reversible and dependent on a glutaredoxin.

The enzyme catalyses D-ribulose 5-phosphate = (2S)-2-hydroxy-3-oxobutyl phosphate + formate + H(+). The protein operates within cofactor biosynthesis; riboflavin biosynthesis; 2-hydroxy-3-oxobutyl phosphate from D-ribulose 5-phosphate: step 1/1. Functionally, catalyzes the conversion of D-ribulose 5-phosphate to formate and 3,4-dihydroxy-2-butanone 4-phosphate. In Schizosaccharomyces pombe (strain 972 / ATCC 24843) (Fission yeast), this protein is 3,4-dihydroxy-2-butanone 4-phosphate synthase.